Reading from the N-terminus, the 867-residue chain is Protein argonaute-3 (867 aa).

Residues 1–83 (MSGRGNLLSL…IDTLKTDDHT (83 aa)) form a necessary and sufficient for interaction with krimp region. An interaction with papi region spans residues 1–289 (MSGRGNLLSL…CDVSHRILCQ (289 aa)). 3 positions are modified to symmetric dimethylarginine: Arg4, Arg68, and Arg70. One can recognise a PAZ domain in the interval 291–402 (TVLEMLVDLY…LIPELCYLTG (112 aa)). Positions 566–853 (MVVCICHNRR…LAYLIGQSIQ (288 aa)) constitute a Piwi domain.

The protein belongs to the argonaute family. Piwi subfamily. In terms of assembly, component of the ping-pong piRNA processing (4P) complex consisting of krimp, aub and AGO3. Interacts (via N-terminus when not methylated on arginine residues) with krimp (via non-canonical tudor domain); this interaction leads to symmetrical dimethylation on AGO3 arginine residues and its subsequent dissociation from krimp. Krimp associated AGO3 is mostly free of piRNA binding and the interaction plays an important role in the loading of AGO3 with piRNAs; piRNA binding may stimulate dissociation of the two proteins. May form part of a piRNA processing complex consisting of tud, aub and AGO3. Interacts (when symmetrically dimethylated on arginine residues) with tud. Forms a complex with smg, twin, aub, nos mRNA and piRNAs that target the nos 3'-untranslated region, in early embryos. Interacts (via the N-terminal region when symmetrically methylated on arginine residues) with papi (via C-terminus); this interaction is RNA-independent and may be required for AGO3 localization to the nuage. Interacts with TER94 and tral. In terms of processing, symmetrically dimethylated on Arg-4, Arg-68 and Arg-70, most likely by csul/PRMT5/DART5. Methylation state probably functions as an indicator of its piRNA binding state. In ovary, expressed in germline stem cells, germline cyst cells, nurse cells and oocytes during early stages. Also found in the somatic cap cells of the germarium. In testis, expressed in germline stem cells, primary gonial cells and early spermatocytes. No expression detected in the somatic hub cells at the apical tip of the testis (at protein level). Expressed in neurons throughout the adult brain and in the mushroom body subdivision in the peduncle. In the mushroom body, expressed only in gamma and core alpha-beta neurons.

Its subcellular location is the cytoplasm. The protein resides in the perinuclear region. It is found in the cytoplasmic ribonucleoprotein granule. Functionally, component of the perinuclear meiotic nuage, a germline-specific subcellular membraneless ribonucleoprotein compartment involved in production of transposable element-repressing Piwi-interacting RNA (piRNA)-induced silencing complexes (piRISCs), which are essential for maintaining germline integrity during oogenesis. Acts via the Piwi-interacting RNA (piRNA) metabolic process, which mediates the repression of transposable elements during meiosis by forming complexes composed of piRNAs and Piwi proteins and governs the methylation and subsequent repression of transposons. Piwi protein that directly binds piRNAs, a class of 24 to 30 nucleotide RNAs that are generated by a Dicer-independent mechanism and are primarily derived from transposons and other repeated sequence elements. Associates predominantly with sense piRNAs that contain adenine at nucleotide 10, but shows no preference for uridine at the 5' end. Shows RNA cleavage or slicer activity. Together with Piwi protein aub recruited to subregions of the perinuclear nuage by krimp, which coordinates their activity in the ping-pong amplification step of secondary piRNA biogenesis. Krimp recruits piRNA bound aub and unbound AGO3, bringing them into close proximity to facilitate the loading onto AGO3 of freshly cut piRNAs generated by aub cleavage of target sequences; krimp recognizes the piRNA loading state of the Piwi proteins via symmetrically dimethylated arginine modification in their N-terminus. Important for asymmetric ping-pong amplification to bias production towards antisense piRNAs capable of silencing transposable elements. In testis, associates with Su(Ste) and AT-chX-1 piRNAs mostly produced from antisense precursors. In the germline, acts to amplify pools of antisense piRNAs, among others Su(Ste), AT-chX-1 and roo, and to limit sense piRNA accumulation. Forms a complex with smg, twin, aub and specific piRNAs that targets nos mRNA (and probably other maternal mRNAS) for deadenylation promoting its decay during early embryogenesis. Involved in transposon silencing in the adult brain. In Drosophila melanogaster (Fruit fly), this protein is Protein argonaute-3.